The chain runs to 45 residues: Photosystem II reaction center protein K (45 aa).

Positions 1 to 8 (MFSINFLG) are excised as a propeptide. Residues 17–37 (FDPIVDVLPIIPLLFLLLAFV) traverse the membrane as a helical segment.

This sequence belongs to the PsbK family. As to quaternary structure, PSII is composed of 1 copy each of membrane proteins PsbA, PsbB, PsbC, PsbD, PsbE, PsbF, PsbH, PsbI, PsbJ, PsbK, PsbL, PsbM, PsbT, PsbY, PsbZ, Psb30/Ycf12, at least 3 peripheral proteins of the oxygen-evolving complex and a large number of cofactors. It forms dimeric complexes.

It localises to the plastid. The protein localises to the chloroplast thylakoid membrane. Functionally, one of the components of the core complex of photosystem II (PSII). PSII is a light-driven water:plastoquinone oxidoreductase that uses light energy to abstract electrons from H(2)O, generating O(2) and a proton gradient subsequently used for ATP formation. It consists of a core antenna complex that captures photons, and an electron transfer chain that converts photonic excitation into a charge separation. This is Photosystem II reaction center protein K from Euglena viridis (Cercaria viridis).